The sequence spans 145 residues: 3-hydroxyacyl-[acyl-carrier-protein] dehydratase FabZ (145 aa).

The active site involves His47.

It belongs to the thioester dehydratase family. FabZ subfamily.

The protein localises to the cytoplasm. It carries out the reaction a (3R)-hydroxyacyl-[ACP] = a (2E)-enoyl-[ACP] + H2O. Functionally, involved in unsaturated fatty acids biosynthesis. Catalyzes the dehydration of short chain beta-hydroxyacyl-ACPs and long chain saturated and unsaturated beta-hydroxyacyl-ACPs. This chain is 3-hydroxyacyl-[acyl-carrier-protein] dehydratase FabZ, found in Thiobacillus denitrificans (strain ATCC 25259 / T1).